Consider the following 398-residue polypeptide: Acetate kinase (398 aa).

N9 is a binding site for Mg(2+). Residue K16 coordinates ATP. Position 90 (R90) interacts with substrate. The active-site Proton donor/acceptor is D147. ATP is bound by residues 207–211, 282–284, and 330–334; these read HIGNG, DLR, and GVGEN. Mg(2+) is bound at residue E384.

The protein belongs to the acetokinase family. Homodimer. Mg(2+) serves as cofactor. Requires Mn(2+) as cofactor.

It is found in the cytoplasm. The enzyme catalyses acetate + ATP = acetyl phosphate + ADP. Its pathway is metabolic intermediate biosynthesis; acetyl-CoA biosynthesis; acetyl-CoA from acetate: step 1/2. In terms of biological role, catalyzes the formation of acetyl phosphate from acetate and ATP. Can also catalyze the reverse reaction. This Staphylococcus haemolyticus (strain JCSC1435) protein is Acetate kinase.